We begin with the raw amino-acid sequence, 90 residues long: Acylphosphatase (90 aa).

The Acylphosphatase-like domain occupies 3 to 90; that stretch reads KKQFIVYGLV…REFTDFSVRY (88 aa). Residues arginine 18 and asparagine 36 contribute to the active site.

It belongs to the acylphosphatase family.

It catalyses the reaction an acyl phosphate + H2O = a carboxylate + phosphate + H(+). The protein is Acylphosphatase (acyP) of Pasteurella multocida (strain Pm70).